Here is a 308-residue protein sequence, read N- to C-terminus: Isoaspartyl peptidase/L-asparaginase (308 aa).

M1 is modified (N-acetylmethionine). Residue T168 is the Nucleophile of the active site. Substrate contacts are provided by residues 196–199 (RVGD) and 219–222 (TGHG).

This sequence belongs to the Ntn-hydrolase family. Heterodimer of an alpha and beta chain produced by autocleavage. This heterodimer may then dimerize in turn, giving rise to a heterotetramer. Post-translationally, cleaved into an alpha and beta chain by autocatalysis; this activates the enzyme. The N-terminal residue of the beta subunit is responsible for the nucleophile hydrolase activity.

It localises to the cytoplasm. It carries out the reaction L-asparagine + H2O = L-aspartate + NH4(+). It catalyses the reaction Cleavage of a beta-linked Asp residue from the N-terminus of a polypeptide.. Has both L-asparaginase and beta-aspartyl peptidase activity. May be involved in the production of L-aspartate, which can act as an excitatory neurotransmitter in some brain regions. Is highly active with L-Asp beta-methyl ester. Besides, has catalytic activity toward beta-aspartyl dipeptides and their methyl esters, including beta-L-Asp-L-Phe, beta-L-Asp-L-Phe methyl ester (aspartame), beta-L-Asp-L-Ala, beta-L-Asp-L-Leu and beta-L-Asp-L-Lys. Does not have aspartylglucosaminidase activity and is inactive toward GlcNAc-L-Asn. Likewise, has no activity toward glutamine. This chain is Isoaspartyl peptidase/L-asparaginase (ASRGL1), found in Macaca fascicularis (Crab-eating macaque).